The primary structure comprises 105 residues: Large ribosomal subunit protein uL24 (105 aa).

This sequence belongs to the universal ribosomal protein uL24 family. In terms of assembly, part of the 50S ribosomal subunit.

Functionally, one of two assembly initiator proteins, it binds directly to the 5'-end of the 23S rRNA, where it nucleates assembly of the 50S subunit. Its function is as follows. One of the proteins that surrounds the polypeptide exit tunnel on the outside of the subunit. The chain is Large ribosomal subunit protein uL24 from Mycobacterium sp. (strain JLS).